The chain runs to 232 residues: H-2 class II histocompatibility antigen, E-S beta chain (232 aa).

A beta-1 region spans residues 1 to 90 (WFLEYSTSEC…LDKFLVPRRV (90 aa)). Residues 1–193 (WFLEYSTSEC…KAQSTSAQNK (193 aa)) lie on the Extracellular side of the membrane. Intrachain disulfides connect Cys10–Cys74 and Cys112–Cys168. Asn14 carries an N-linked (GlcNAc...) asparagine glycan. Residues 91-193 (EPTVTVYPTK…KAQSTSAQNK (103 aa)) are beta-2. The region spanning 92 to 182 (PTVTVYPTKT…PSLTDPVTVE (91 aa)) is the Ig-like C1-type domain. A helical transmembrane segment spans residues 194-216 (MLSGVGGFVLGLLFLGAGLFIYF). Residues 217 to 232 (RNQKGQSGLQPTGLLS) are Cytoplasmic-facing.

It belongs to the MHC class II family. In terms of processing, ubiquitinated in immature dendritic cells leading to down-regulation of MHC class II.

Its subcellular location is the membrane. This is H-2 class II histocompatibility antigen, E-S beta chain (H2-Eb1) from Mus musculus (Mouse).